Consider the following 20-residue polypeptide: Pregnancy-associated glycoprotein 67A (20 aa).

Residues Asn-4 and Asn-20 are each glycosylated (N-linked (GlcNAc...) asparagine).

Belongs to the peptidase A1 family. As to expression, chorionic epithelium (trophectoderm) and placental cotyledons.

Its subcellular location is the secreted. It is found in the extracellular space. The sequence is that of Pregnancy-associated glycoprotein 67A from Bison bonasus (European bison).